The primary structure comprises 249 residues: Domoic acid biosynthesis cluster protein B (249 aa).

In terms of biological role, unknown function: part of the gene cluster that mediates the biosynthesis of domoic acid (DA) and derivatives, natural products with neurochemical activity acting as ionotropic glutamate receptor (iGluR) agonists, thus being neurotoxins causing amnesic shellfish poisoning (ASP). This chain is Domoic acid biosynthesis cluster protein B, found in Pseudo-nitzschia multiseries (Marine planktonic diatom).